The following is a 489-amino-acid chain: Glycogen synthase (489 aa).

Position 17 (Lys17) interacts with ADP-alpha-D-glucose.

The protein belongs to the glycosyltransferase 1 family. Bacterial/plant glycogen synthase subfamily.

The enzyme catalyses [(1-&gt;4)-alpha-D-glucosyl](n) + ADP-alpha-D-glucose = [(1-&gt;4)-alpha-D-glucosyl](n+1) + ADP + H(+). It participates in glycan biosynthesis; glycogen biosynthesis. Its function is as follows. Synthesizes alpha-1,4-glucan chains using ADP-glucose. The protein is Glycogen synthase of Nitratidesulfovibrio vulgaris (strain ATCC 29579 / DSM 644 / CCUG 34227 / NCIMB 8303 / VKM B-1760 / Hildenborough) (Desulfovibrio vulgaris).